The chain runs to 134 residues: Holo-[acyl-carrier-protein] synthase (134 aa).

Mg(2+) is bound by residues D8 and E58.

It belongs to the P-Pant transferase superfamily. AcpS family. Requires Mg(2+) as cofactor.

The protein resides in the cytoplasm. It catalyses the reaction apo-[ACP] + CoA = holo-[ACP] + adenosine 3',5'-bisphosphate + H(+). In terms of biological role, transfers the 4'-phosphopantetheine moiety from coenzyme A to a Ser of acyl-carrier-protein. The polypeptide is Holo-[acyl-carrier-protein] synthase (Acidiphilium cryptum (strain JF-5)).